The primary structure comprises 131 residues: Small ribosomal subunit protein eS8 (131 aa).

Residues 15–36 (PSGGKKGRVRKTKKKALGGGPP) are disordered. Residues 17–30 (GGKKGRVRKTKKKA) are compositionally biased toward basic residues.

The protein belongs to the eukaryotic ribosomal protein eS8 family. As to quaternary structure, part of the 30S ribosomal subunit.

In Pyrobaculum calidifontis (strain DSM 21063 / JCM 11548 / VA1), this protein is Small ribosomal subunit protein eS8.